The following is a 145-amino-acid chain: 3-hydroxyacyl-[acyl-carrier-protein] dehydratase FabZ (145 aa).

Residue histidine 49 is part of the active site.

Belongs to the thioester dehydratase family. FabZ subfamily.

The protein localises to the cytoplasm. The catalysed reaction is a (3R)-hydroxyacyl-[ACP] = a (2E)-enoyl-[ACP] + H2O. Its function is as follows. Involved in unsaturated fatty acids biosynthesis. Catalyzes the dehydration of short chain beta-hydroxyacyl-ACPs and long chain saturated and unsaturated beta-hydroxyacyl-ACPs. The sequence is that of 3-hydroxyacyl-[acyl-carrier-protein] dehydratase FabZ from Rickettsia africae (strain ESF-5).